The primary structure comprises 395 residues: Imidazolonepropionase (395 aa).

Fe(3+) contacts are provided by His-63 and His-65. His-63 and His-65 together coordinate Zn(2+). 4-imidazolone-5-propanoate is bound by residues Arg-72, Tyr-135, and His-168. Tyr-135 contacts N-formimidoyl-L-glutamate. Residue His-233 participates in Fe(3+) binding. A Zn(2+)-binding site is contributed by His-233. A 4-imidazolone-5-propanoate-binding site is contributed by Gln-236. Residue Asp-308 participates in Fe(3+) binding. A Zn(2+)-binding site is contributed by Asp-308. Positions 310 and 312 each coordinate N-formimidoyl-L-glutamate. Position 313 (Thr-313) interacts with 4-imidazolone-5-propanoate.

This sequence belongs to the metallo-dependent hydrolases superfamily. HutI family. It depends on Zn(2+) as a cofactor. Requires Fe(3+) as cofactor.

It is found in the cytoplasm. It carries out the reaction 4-imidazolone-5-propanoate + H2O = N-formimidoyl-L-glutamate. The protein operates within amino-acid degradation; L-histidine degradation into L-glutamate; N-formimidoyl-L-glutamate from L-histidine: step 3/3. Its function is as follows. Catalyzes the hydrolytic cleavage of the carbon-nitrogen bond in imidazolone-5-propanoate to yield N-formimidoyl-L-glutamate. It is the third step in the universal histidine degradation pathway. This chain is Imidazolonepropionase, found in Cereibacter sphaeroides (strain ATCC 17023 / DSM 158 / JCM 6121 / CCUG 31486 / LMG 2827 / NBRC 12203 / NCIMB 8253 / ATH 2.4.1.) (Rhodobacter sphaeroides).